The chain runs to 1019 residues: Collagen alpha-1(VI) chain (1019 aa).

A signal peptide spans 1–19 (MGLHDSFLALLLLLGGAWA). The 197-residue stretch at 37 to 233 (DLFFVLDTSE…LDVEETINNI (197 aa)) folds into the VWFA 1 domain. Asn-212 carries an N-linked (GlcNAc...) asparagine glycan. Residues 248-588 (FECHPPRGPP…GPPGPVGPPG (341 aa)) form a disordered region. Positions 253-262 (PRGPPGPPGD) are enriched in pro residues. Basic and acidic residues-rich tracts occupy residues 299–332 (KGDK…DGMK) and 370–380 (GKGEPGEDGKP). Residues 427–436 (ERGPPGSPGD) are compositionally biased toward low complexity. Residues 476-478 (RGD) carry the Cell attachment site motif. The N-linked (GlcNAc...) asparagine glycan is linked to Asn-514. Residues 529-531 (RGD) carry the Cell attachment site motif. The N-linked (GlcNAc...) asparagine glycan is linked to Asn-535. Pro residues predominate over residues 577–588 (RPGPPGPVGPPG). VWFA domains follow at residues 613–800 (DLLF…LQNI) and 824–1012 (DIML…YQTV). Residues Asn-799 and Asn-887 are each glycosylated (N-linked (GlcNAc...) asparagine).

Belongs to the type VI collagen family. In terms of assembly, trimers composed of three different chains: alpha 1(VI), alpha 2(VI), and alpha 3(VI). In terms of processing, prolines at the third position of the tripeptide repeating unit (G-X-Y) are hydroxylated in some or all of the chains.

It localises to the secreted. It is found in the extracellular space. The protein resides in the extracellular matrix. In terms of biological role, collagen VI acts as a cell-binding protein. The protein is Collagen alpha-1(VI) chain (COL6A1) of Gallus gallus (Chicken).